The primary structure comprises 265 residues: Hydroxyethylthiazole kinase (265 aa).

Methionine 50 is a substrate binding site. Arginine 125 and threonine 171 together coordinate ATP. Glycine 198 provides a ligand contact to substrate.

Belongs to the Thz kinase family. Mg(2+) serves as cofactor.

It catalyses the reaction 5-(2-hydroxyethyl)-4-methylthiazole + ATP = 4-methyl-5-(2-phosphooxyethyl)-thiazole + ADP + H(+). The protein operates within cofactor biosynthesis; thiamine diphosphate biosynthesis; 4-methyl-5-(2-phosphoethyl)-thiazole from 5-(2-hydroxyethyl)-4-methylthiazole: step 1/1. Its function is as follows. Catalyzes the phosphorylation of the hydroxyl group of 4-methyl-5-beta-hydroxyethylthiazole (THZ). The protein is Hydroxyethylthiazole kinase of Salmonella arizonae (strain ATCC BAA-731 / CDC346-86 / RSK2980).